We begin with the raw amino-acid sequence, 371 residues long: Hsc70-interacting protein (371 aa).

The interval 38-80 (MGGKVPPATHKAKSEENTKEEKRDKTTEENIKTEELSSEESDL) is disordered. Residues 49–72 (AKSEENTKEEKRDKTTEENIKTEE) are compositionally biased toward basic and acidic residues. TPR repeat units follow at residues 113 to 146 (ANEK…NPRL), 147 to 180 (AILY…NPDS), and 181 to 214 (AQPY…DYDE). Residues 255–271 (KAREEHERAQREEEARR) show a composition bias toward basic and acidic residues. Residues 255-296 (KAREEHERAQREEEARRQSGSQYGSFPGGFPGGMPGNFPGGM) are disordered. A compositionally biased stretch (gly residues) spans 280 to 296 (FPGGFPGGMPGNFPGGM). Positions 321–360 (DPEVLAAMQDPEVMVAFQDVAQNPSNMSKYQSNPKVMNLI) constitute an STI1 domain. S348 is modified (phosphoserine; by GRK5). N6-acetyllysine is present on residues K355 and K362.

The protein belongs to the FAM10 family. In terms of assembly, homotetramer. Interacts with HSC70 as well as DNAJ homologs and HSP90. Interacts (via the C-terminus 302- 318 AA) with GRK5.

The protein resides in the cytoplasm. One HIP oligomer binds the ATPase domains of at least two HSC70 molecules dependent on activation of the HSC70 ATPase by HSP40. Stabilizes the ADP state of HSC70 that has a high affinity for substrate protein. Through its own chaperone activity, it may contribute to the interaction of HSC70 with various target proteins. This chain is Hsc70-interacting protein (St13), found in Mus musculus (Mouse).